We begin with the raw amino-acid sequence, 70 residues long: Small ribosomal subunit protein bS18c (70 aa).

It belongs to the bacterial ribosomal protein bS18 family. As to quaternary structure, part of the 30S ribosomal subunit.

It is found in the plastid. Its subcellular location is the chloroplast. The polypeptide is Small ribosomal subunit protein bS18c (Gracilaria tenuistipitata var. liui (Red alga)).